The following is a 569-amino-acid chain: Arginine--tRNA ligase (569 aa).

Residues 128 to 138 (ANPTGPLHVGH) carry the 'HIGH' region motif.

The protein belongs to the class-I aminoacyl-tRNA synthetase family. As to quaternary structure, monomer.

It localises to the cytoplasm. It carries out the reaction tRNA(Arg) + L-arginine + ATP = L-arginyl-tRNA(Arg) + AMP + diphosphate. This is Arginine--tRNA ligase from Paracidovorax citrulli (strain AAC00-1) (Acidovorax citrulli).